The chain runs to 365 residues: 3-amino-4-hydroxybenzoate 4-O-methyltransferase (365 aa).

Residues 1–18 (MTVPENAQHTAPDQTQHT) are compositionally biased toward polar residues. Residues 1–32 (MTVPENAQHTAPDQTQHTAPDRTRQAQQAAPD) are disordered. S-adenosyl-L-methionine is bound by residues Asp227, 253–255 (GDF), and Arg270. The active-site Proton acceptor is the His273.

The protein belongs to the class I-like SAM-binding methyltransferase superfamily. Cation-independent O-methyltransferase family.

The catalysed reaction is 3-amino-2,4-dihydroxybenzoate + S-adenosyl-L-methionine = 3-amino-2-hydroxy-4-methoxybenzoate + S-adenosyl-L-homocysteine + H(+). It participates in antibiotic biosynthesis. Functionally, part of a gene cluster involved in the biosynthesis of cremeomycin, a light-sensitive o-diazoquinone with antibacterial and antiproliferative effects. Catalyzes the methylation of the C4 hydroxyl group of 3-amino-2,4-dihydroxybenzoate (3,2,4-ADHBA) to form 3-amino-2-hydroxy-4-methoxybenzoate (3,2,4-AHMBA). In vitro, can also catalyze the methylation of 3-amino-4-hydroxybenzoate (3,4-AHBA). The protein is 3-amino-4-hydroxybenzoate 4-O-methyltransferase of Streptomyces cremeus.